Here is a 404-residue protein sequence, read N- to C-terminus: Probable oxalate decarboxylase ARB_04859 (404 aa).

The signal sequence occupies residues 1-17; that stretch reads MKYSAVLVAALAAIADA. Positions 74–215 constitute a Cupin type-1 1 domain; sequence FSLSKTRMLY…NFGVPPSTFD (142 aa). Mn(2+) is bound by residues His-117, His-119, Glu-123, and His-162. Asn-226 and Asn-244 each carry an N-linked (GlcNAc...) asparagine glycan. The Cupin type-1 2 domain maps to 249 to 393; it reads FHISNAPEIQ…AINVPIEVIE (145 aa). 4 residues coordinate Mn(2+): His-296, His-298, Glu-303, and His-342. Residue Asn-346 is glycosylated (N-linked (GlcNAc...) asparagine). Glu-357 serves as the catalytic Proton donor.

It depends on Mn(2+) as a cofactor.

It is found in the secreted. The enzyme catalyses oxalate + H(+) = formate + CO2. Converts oxalate to formate and CO(2) in an O(2)-dependent reaction. Can also catalyze minor side reactions: oxalate oxidation to produce H(2)O(2), and oxalate-dependent, H(2)O(2)-independent dye oxidations. This Arthroderma benhamiae (strain ATCC MYA-4681 / CBS 112371) (Trichophyton mentagrophytes) protein is Probable oxalate decarboxylase ARB_04859.